Consider the following 120-residue polypeptide: NAD(P)H-quinone oxidoreductase subunit 3, chloroplastic (120 aa).

3 helical membrane passes run 10–30 (FWAFLLIASLVPVLAVGTSSL), 64–84 (MFALVFVVFDVETVFLYPWAM), and 89–109 (LGVLAFIEALVFVLVLIIGLV).

The protein belongs to the complex I subunit 3 family. In terms of assembly, NDH is composed of at least 16 different subunits, 5 of which are encoded in the nucleus.

The protein resides in the plastid. The protein localises to the chloroplast thylakoid membrane. The enzyme catalyses a plastoquinone + NADH + (n+1) H(+)(in) = a plastoquinol + NAD(+) + n H(+)(out). It catalyses the reaction a plastoquinone + NADPH + (n+1) H(+)(in) = a plastoquinol + NADP(+) + n H(+)(out). In terms of biological role, NDH shuttles electrons from NAD(P)H:plastoquinone, via FMN and iron-sulfur (Fe-S) centers, to quinones in the photosynthetic chain and possibly in a chloroplast respiratory chain. The immediate electron acceptor for the enzyme in this species is believed to be plastoquinone. Couples the redox reaction to proton translocation, and thus conserves the redox energy in a proton gradient. The polypeptide is NAD(P)H-quinone oxidoreductase subunit 3, chloroplastic (Zygnema circumcarinatum (Green alga)).